A 212-amino-acid polypeptide reads, in one-letter code: ATP-dependent Clp protease proteolytic subunit (212 aa).

Residue Ser106 is the Nucleophile of the active site. Residue His131 is part of the active site.

The protein belongs to the peptidase S14 family. In terms of assembly, fourteen ClpP subunits assemble into 2 heptameric rings which stack back to back to give a disk-like structure with a central cavity, resembling the structure of eukaryotic proteasomes.

Its subcellular location is the cytoplasm. It catalyses the reaction Hydrolysis of proteins to small peptides in the presence of ATP and magnesium. alpha-casein is the usual test substrate. In the absence of ATP, only oligopeptides shorter than five residues are hydrolyzed (such as succinyl-Leu-Tyr-|-NHMec, and Leu-Tyr-Leu-|-Tyr-Trp, in which cleavage of the -Tyr-|-Leu- and -Tyr-|-Trp bonds also occurs).. Its function is as follows. Cleaves peptides in various proteins in a process that requires ATP hydrolysis. Has a chymotrypsin-like activity. Plays a major role in the degradation of misfolded proteins. In Rhodopseudomonas palustris (strain ATCC BAA-98 / CGA009), this protein is ATP-dependent Clp protease proteolytic subunit.